A 660-amino-acid polypeptide reads, in one-letter code: Kinesin-like protein KIF2A (660 aa).

The segment at 1–140 (MVTSLNEDNE…QQELREKRAQ (140 aa)) is disordered. The tract at residues 1–171 (MVTSLNEDNE…LDYRPLTTAD (171 aa)) is globular. S48 is modified (phosphoserine). T51 and T70 each carry phosphothreonine. S73 bears the Phosphoserine mark. K75 is subject to N6-acetyllysine. The segment covering 96-106 (LPEQSSSAQQN) has biased composition (polar residues). Basic and acidic residues predominate over residues 113-140 (CVKEVEKLQEKREKRRLQQQELREKRAQ). Residues 177–507 (RICVCVRKRP…LRYANRVKEL (331 aa)) enclose the Kinesin motor domain. Position 267–274 (267–274 (GQTGSGKT)) interacts with ATP. A coiled-coil region spans residues 614-653 (ATQLEAILEQKIDILTELRDKVKSFRAALQEEEQASKQIN).

It belongs to the TRAFAC class myosin-kinesin ATPase superfamily. Kinesin family. MCAK/KIF2 subfamily. Interacts with AURKA and PLK1. Interacts with PSRC1. Interacts with MCRS1; the interaction enhances recruitment of KIF2A to the minus ends of spindle microtubules which promotes chromosome alignment.

It localises to the cytoplasm. It is found in the cytoskeleton. The protein resides in the microtubule organizing center. Its subcellular location is the centrosome. The protein localises to the spindle pole. It localises to the spindle. Functionally, plus end-directed microtubule-dependent motor required for normal brain development. May regulate microtubule dynamics during axonal growth. Required for normal progression through mitosis. Required for normal congress of chromosomes at the metaphase plate. Required for normal spindle dynamics during mitosis. Promotes spindle turnover. Implicated in formation of bipolar mitotic spindles. Has microtubule depolymerization activity. The chain is Kinesin-like protein KIF2A (KIF2A) from Bos taurus (Bovine).